The chain runs to 498 residues: UDP-N-acetylmuramoyl-L-alanyl-D-glutamate--2,6-diaminopimelate ligase (498 aa).

S29 contributes to the UDP-N-acetyl-alpha-D-muramoyl-L-alanyl-D-glutamate binding site. Residue 120–126 (GTDGKTS) participates in ATP binding. UDP-N-acetyl-alpha-D-muramoyl-L-alanyl-D-glutamate contacts are provided by residues 162–163 (TT), S189, Q195, and R197. Position 229 is an N6-carboxylysine (K229). Meso-2,6-diaminopimelate-binding positions include R392, 416-419 (DNPR), G466, and E470. The Meso-diaminopimelate recognition motif signature appears at 416–419 (DNPR).

This sequence belongs to the MurCDEF family. MurE subfamily. Mg(2+) serves as cofactor. Carboxylation is probably crucial for Mg(2+) binding and, consequently, for the gamma-phosphate positioning of ATP.

It is found in the cytoplasm. It catalyses the reaction UDP-N-acetyl-alpha-D-muramoyl-L-alanyl-D-glutamate + meso-2,6-diaminopimelate + ATP = UDP-N-acetyl-alpha-D-muramoyl-L-alanyl-gamma-D-glutamyl-meso-2,6-diaminopimelate + ADP + phosphate + H(+). Its pathway is cell wall biogenesis; peptidoglycan biosynthesis. Its function is as follows. Catalyzes the addition of meso-diaminopimelic acid to the nucleotide precursor UDP-N-acetylmuramoyl-L-alanyl-D-glutamate (UMAG) in the biosynthesis of bacterial cell-wall peptidoglycan. The sequence is that of UDP-N-acetylmuramoyl-L-alanyl-D-glutamate--2,6-diaminopimelate ligase from Alkalilimnicola ehrlichii (strain ATCC BAA-1101 / DSM 17681 / MLHE-1).